A 464-amino-acid polypeptide reads, in one-letter code: Protein FAM90A26 (464 aa).

Disordered regions lie at residues 1–42, 70–293, 312–390, and 410–442; these read MMAC…DPRL, PPTL…AKRP, PFQI…DGAQ, and AAPS…VRVP. Basic and acidic residues-rich tracts occupy residues 74 to 83 and 97 to 114; these read GKKEGKENLK and NKDK…DPQR. The span at 178–197 shows a compositional bias: low complexity; the sequence is SALASLSPLRKASLSSSSSL.

This sequence belongs to the FAM90 family.

This is Protein FAM90A26 from Homo sapiens (Human).